A 155-amino-acid polypeptide reads, in one-letter code: UPF0178 protein RPC_3085 (155 aa).

Belongs to the UPF0178 family.

In Rhodopseudomonas palustris (strain BisB18), this protein is UPF0178 protein RPC_3085.